Reading from the N-terminus, the 466-residue chain is Soluble pyridine nucleotide transhydrogenase (466 aa).

An FAD-binding site is contributed by 36–45 (ERYQNVGGGC).

It belongs to the class-I pyridine nucleotide-disulfide oxidoreductase family. FAD serves as cofactor.

The protein localises to the cytoplasm. It catalyses the reaction NAD(+) + NADPH = NADH + NADP(+). Conversion of NADPH, generated by peripheral catabolic pathways, to NADH, which can enter the respiratory chain for energy generation. The sequence is that of Soluble pyridine nucleotide transhydrogenase from Shigella boydii serotype 18 (strain CDC 3083-94 / BS512).